The primary structure comprises 186 residues: Akirin-1 (186 aa).

The interval 1–64 (MACGATLKRS…PLPQLGGDRR (64 aa)) is disordered. Residues 22-27 (PKRRRC) carry the Nuclear localization signal motif. Low complexity predominate over residues 49-60 (QQGQQQPLPQLG). Residues 183-186 (SYVS) carry the SYVS motif motif.

Belongs to the akirin family.

It is found in the nucleus. Its function is as follows. Molecular adapter that acts as a bridge between proteins, and which is involved skeletal muscle development. Functions as a signal transducer for MSTN during skeletal muscle regeneration and myogenesis. This chain is Akirin-1, found in Xenopus tropicalis (Western clawed frog).